The primary structure comprises 397 residues: MSIAAVILAAGRGKRAGSLPKKPKQYRLLGQEPVICHTVRCFCQNPAITTIILVIHPEDRQICEQAIADFKEQLIIVEGGNTRQKSTLRGLQALRKFKPKYVHIHDGARPFVENKLLEQIHTTVTPQEGVLPVLAVCDTLKRINSTHHVLETIPRTHLYSAQTPQCFPFERILAAHEKAIKTCKKEFTDDSAIAEWFGISMRTIPGSPHNIKITWHEDLNTAHLYLQKKMQMFPDIRTGNGYDVHSFEEGNSLILCGIKIPFHKKLNGHSDADVALHALTDALLATRGAGDIGTHFPPSDPQWQNVSSEIFLRHALDIVKQAGGRIANVDITLIAEEPKIGPYRHAMVGNLMNMLTILPDRISIKATTNEKLGFIGRGEGIAAFATANVLYPGEIPK.

Residues 1–236 (MSIAAVILAA…QKKMQMFPDI (236 aa)) form a 2-C-methyl-D-erythritol 4-phosphate cytidylyltransferase region. Residues 237 to 397 (RTGNGYDVHS…NVLYPGEIPK (161 aa)) form a 2-C-methyl-D-erythritol 2,4-cyclodiphosphate synthase region. Residues Asp-243 and His-245 each coordinate a divalent metal cation. 4-CDP-2-C-methyl-D-erythritol 2-phosphate contacts are provided by residues 243-245 (DVH) and 269-270 (HS). A divalent metal cation is bound at residue His-277. 4-CDP-2-C-methyl-D-erythritol 2-phosphate is bound by residues 291-293 (DIG), 367-370 (TTNE), Phe-374, and Arg-377.

This sequence in the N-terminal section; belongs to the IspD/TarI cytidylyltransferase family. IspD subfamily. The protein in the C-terminal section; belongs to the IspF family. A divalent metal cation is required as a cofactor.

The enzyme catalyses 2-C-methyl-D-erythritol 4-phosphate + CTP + H(+) = 4-CDP-2-C-methyl-D-erythritol + diphosphate. It catalyses the reaction 4-CDP-2-C-methyl-D-erythritol 2-phosphate = 2-C-methyl-D-erythritol 2,4-cyclic diphosphate + CMP. It functions in the pathway isoprenoid biosynthesis; isopentenyl diphosphate biosynthesis via DXP pathway; isopentenyl diphosphate from 1-deoxy-D-xylulose 5-phosphate: step 2/6. Its pathway is isoprenoid biosynthesis; isopentenyl diphosphate biosynthesis via DXP pathway; isopentenyl diphosphate from 1-deoxy-D-xylulose 5-phosphate: step 4/6. In terms of biological role, bifunctional enzyme that catalyzes the formation of 4-diphosphocytidyl-2-C-methyl-D-erythritol from CTP and 2-C-methyl-D-erythritol 4-phosphate (MEP) (IspD), and catalyzes the conversion of 4-diphosphocytidyl-2-C-methyl-D-erythritol 2-phosphate (CDP-ME2P) to 2-C-methyl-D-erythritol 2,4-cyclodiphosphate (ME-CPP) with a corresponding release of cytidine 5-monophosphate (CMP) (IspF). The sequence is that of Bifunctional enzyme IspD/IspF from Bartonella henselae (strain ATCC 49882 / DSM 28221 / CCUG 30454 / Houston 1) (Rochalimaea henselae).